The sequence spans 436 residues: Trigger factor (436 aa).

Residues Gly163 to Pro248 form the PPIase FKBP-type domain.

This sequence belongs to the FKBP-type PPIase family. Tig subfamily.

The protein resides in the cytoplasm. It catalyses the reaction [protein]-peptidylproline (omega=180) = [protein]-peptidylproline (omega=0). In terms of biological role, involved in protein export. Acts as a chaperone by maintaining the newly synthesized protein in an open conformation. Functions as a peptidyl-prolyl cis-trans isomerase. The sequence is that of Trigger factor from Bordetella petrii (strain ATCC BAA-461 / DSM 12804 / CCUG 43448).